A 318-amino-acid polypeptide reads, in one-letter code: Protein IMPACT-A (318 aa).

Residues 14 to 116 (DEVEALTSIY…EKIREFLLGK (103 aa)) enclose the RWD domain. A disordered region spans residues 296-318 (EESSKQTAKSKKVGKECKKKADH). Over residues 308 to 318 (VGKECKKKADH) the composition is skewed to basic and acidic residues.

The protein belongs to the IMPACT family. Interacts with GCN1; prevents the interaction of GCN1 with EIF2AK4/GCN2 and inhibits EIF2AK4/GCN2 kinase activity. Interaction with RPL39; this interaction occurs in a GCN1-independent manner. Associates with ribosomes; this interaction occurs in a GCN1-independent manner. Associates with actin; this interaction occurs in a GCN1-independent manner.

The protein resides in the cytoplasm. Translational regulator that ensures constant high levels of translation upon a variety of stress conditions, such as amino acid starvation, UV-C irradiation, proteasome inhibitor treatment and glucose deprivation. Plays a role as a negative regulator of the EIF2AK4/GCN2 kinase activity; impairs GCN1-mediated EIF2AK4/GCN2 activation, and hence EIF2AK4/GCN2-mediated eIF-2-alpha phosphorylation and subsequent down-regulation of protein synthesis. Plays a role in differentiation of neuronal cells by stimulating neurite outgrowth. The protein is Protein IMPACT-A (impact-A) of Xenopus tropicalis (Western clawed frog).